A 281-amino-acid polypeptide reads, in one-letter code: NADPH-dependent 7-cyano-7-deazaguanine reductase (281 aa).

81–83 (VES) contributes to the substrate binding site. Position 83 to 84 (83 to 84 (SK)) interacts with NADPH. C188 (thioimide intermediate) is an active-site residue. The active-site Proton donor is D195. A substrate-binding site is contributed by 227 to 228 (HE). Residue 256–257 (RG) coordinates NADPH.

Belongs to the GTP cyclohydrolase I family. QueF type 2 subfamily. Homodimer.

The protein resides in the cytoplasm. It carries out the reaction 7-aminomethyl-7-carbaguanine + 2 NADP(+) = 7-cyano-7-deazaguanine + 2 NADPH + 3 H(+). Its pathway is tRNA modification; tRNA-queuosine biosynthesis. In terms of biological role, catalyzes the NADPH-dependent reduction of 7-cyano-7-deazaguanine (preQ0) to 7-aminomethyl-7-deazaguanine (preQ1). The chain is NADPH-dependent 7-cyano-7-deazaguanine reductase from Acidovorax ebreus (strain TPSY) (Diaphorobacter sp. (strain TPSY)).